A 193-amino-acid chain; its full sequence is Potassium-transporting ATPase KdpC subunit (193 aa).

The helical transmembrane segment at 7–27 (PLVVLFVVLNAVTGLAYPAVM) threads the bilayer.

It belongs to the KdpC family. In terms of assembly, the system is composed of three essential subunits: KdpA, KdpB and KdpC.

The protein resides in the cell inner membrane. In terms of biological role, part of the high-affinity ATP-driven potassium transport (or Kdp) system, which catalyzes the hydrolysis of ATP coupled with the electrogenic transport of potassium into the cytoplasm. This subunit acts as a catalytic chaperone that increases the ATP-binding affinity of the ATP-hydrolyzing subunit KdpB by the formation of a transient KdpB/KdpC/ATP ternary complex. The protein is Potassium-transporting ATPase KdpC subunit of Burkholderia cenocepacia (strain HI2424).